We begin with the raw amino-acid sequence, 128 residues long: Small ribosomal subunit protein uS9 (128 aa).

The protein belongs to the universal ribosomal protein uS9 family.

In Christiangramia forsetii (strain DSM 17595 / CGMCC 1.15422 / KT0803) (Gramella forsetii), this protein is Small ribosomal subunit protein uS9.